A 157-amino-acid polypeptide reads, in one-letter code: Small ribosomal subunit protein uS17 (157 aa).

It belongs to the universal ribosomal protein uS17 family.

This Dunaliella tertiolecta (Green alga) protein is Small ribosomal subunit protein uS17 (RPS11).